Consider the following 96-residue polypeptide: Protein Vpr (96 aa).

Residues 1 to 42 (MEQAPADQGPQREPHNEWTLELLEELKQEAVRHFPRIWLHSL) are homooligomerization. A phosphoserine; by host mark is found at serine 79, serine 94, and serine 96.

This sequence belongs to the HIV-1 VPR protein family. Homooligomer, may form homodimer. Interacts with p6-gag region of the Pr55 Gag precursor protein through a (Leu-X-X)4 motif near the C-terminus of the P6gag protein. Interacts with host UNG. May interact with host RAD23A/HHR23A. Interacts with host VPRBP/DCAF1, leading to hijack the CUL4A-RBX1-DDB1-DCAF1/VPRBP complex, mediating ubiquitination of host proteins such as TERT and ZGPAT and arrest of the cell cycle in G2 phase. In terms of processing, phosphorylated on several residues by host. These phosphorylations regulate VPR activity for the nuclear import of the HIV-1 pre-integration complex.

Its subcellular location is the virion. The protein localises to the host nucleus. It localises to the host extracellular space. Functionally, during virus replication, may deplete host UNG protein, and incude G2-M cell cycle arrest. Acts by targeting specific host proteins for degradation by the 26S proteasome, through association with the cellular CUL4A-DDB1 E3 ligase complex by direct interaction with host VPRPB/DCAF-1. Cell cycle arrest reportedly occurs within hours of infection and is not blocked by antiviral agents, suggesting that it is initiated by the VPR carried into the virion. Additionally, VPR induces apoptosis in a cell cycle dependent manner suggesting that these two effects are mechanistically linked. Detected in the serum and cerebrospinal fluid of AIDS patient, VPR may also induce cell death to bystander cells. In terms of biological role, during virus entry, plays a role in the transport of the viral pre-integration (PIC) complex to the host nucleus. This function is crucial for viral infection of non-dividing macrophages. May act directly at the nuclear pore complex, by binding nucleoporins phenylalanine-glycine (FG)-repeat regions. In Homo sapiens (Human), this protein is Protein Vpr.